Reading from the N-terminus, the 282-residue chain is MTHWPSPAKLNLFLYITGQRADGYHTLQTLFQFLDYGDTLHIEPRRDGEIHLLTPVNGVENEDNLIVRAARLLMKIASESGRLPAGSGADISIEKRLPMGGGLGGGSSNAATVLVALNHLWQCGLSIDELATLGLTLGADVPVFVRGHAAFAEGVGEILTPVNPPEKWYLVAHPGVSIPTPVIFKDPQLPRNTPKRSIDTLLKCEFSNDCEVIARKRFREVDAALSWLLEYAPSRLTGTGACVFAEFDTESCARQVLEQAPEWLNAFVAKGVNLSPLHRELL.

K9 is a catalytic residue. 98-108 (PMGGGLGGGSS) serves as a coordination point for ATP. The active site involves D140.

The protein belongs to the GHMP kinase family. IspE subfamily. As to quaternary structure, homodimer.

It carries out the reaction 4-CDP-2-C-methyl-D-erythritol + ATP = 4-CDP-2-C-methyl-D-erythritol 2-phosphate + ADP + H(+). Its pathway is isoprenoid biosynthesis; isopentenyl diphosphate biosynthesis via DXP pathway; isopentenyl diphosphate from 1-deoxy-D-xylulose 5-phosphate: step 3/6. Functionally, catalyzes the phosphorylation of the position 2 hydroxy group of 4-diphosphocytidyl-2C-methyl-D-erythritol. This Salmonella heidelberg (strain SL476) protein is 4-diphosphocytidyl-2-C-methyl-D-erythritol kinase.